The primary structure comprises 401 residues: Imidazolonepropionase (401 aa).

His-70 and His-72 together coordinate Fe(3+). Zn(2+) contacts are provided by His-70 and His-72. Residues Arg-79, Tyr-142, and His-175 each coordinate 4-imidazolone-5-propanoate. N-formimidoyl-L-glutamate is bound at residue Tyr-142. Fe(3+) is bound at residue His-238. Zn(2+) is bound at residue His-238. Gln-241 serves as a coordination point for 4-imidazolone-5-propanoate. Asp-313 contributes to the Fe(3+) binding site. Asp-313 serves as a coordination point for Zn(2+). Positions 315 and 317 each coordinate N-formimidoyl-L-glutamate. Position 318 (Thr-318) interacts with 4-imidazolone-5-propanoate.

It belongs to the metallo-dependent hydrolases superfamily. HutI family. It depends on Zn(2+) as a cofactor. Fe(3+) is required as a cofactor.

It localises to the cytoplasm. The catalysed reaction is 4-imidazolone-5-propanoate + H2O = N-formimidoyl-L-glutamate. It participates in amino-acid degradation; L-histidine degradation into L-glutamate; N-formimidoyl-L-glutamate from L-histidine: step 3/3. Catalyzes the hydrolytic cleavage of the carbon-nitrogen bond in imidazolone-5-propanoate to yield N-formimidoyl-L-glutamate. It is the third step in the universal histidine degradation pathway. The chain is Imidazolonepropionase from Xanthomonas oryzae pv. oryzae (strain MAFF 311018).